A 627-amino-acid chain; its full sequence is (-)-alpha-pinene synthase 2, chloroplastic (627 aa).

The transit peptide at 1-36 (MALVSVAPMASRSCLHKSLSSSAHELKTICRTIPTL) directs the protein to the chloroplast. Mg(2+) is bound by residues Asp378, Asp382, and Asp530. Positions 378–382 (DDMYD) match the DDXXD motif motif.

This sequence belongs to the terpene synthase family. Tpsd subfamily. It depends on Mg(2+) as a cofactor. Mn(2+) serves as cofactor.

The protein localises to the plastid. The protein resides in the chloroplast. It catalyses the reaction (2E)-geranyl diphosphate = (1S,5S)-alpha-pinene + diphosphate. The enzyme catalyses (2E)-geranyl diphosphate = (1S,5S)-beta-pinene + diphosphate. Its pathway is terpene metabolism; oleoresin biosynthesis. In terms of biological role, involved in defensive oleoresin formation in conifers in response to insect attack or other injury. Involved in monoterpene (C10) olefins biosynthesis. A mixture of alpha- and beta-pinene (35:10) is produced by this enzyme. The protein is (-)-alpha-pinene synthase 2, chloroplastic of Picea sitchensis (Sitka spruce).